Consider the following 90-residue polypeptide: Probable Fe(2+)-trafficking protein (90 aa).

It belongs to the Fe(2+)-trafficking protein family.

Functionally, could be a mediator in iron transactions between iron acquisition and iron-requiring processes, such as synthesis and/or repair of Fe-S clusters in biosynthetic enzymes. The chain is Probable Fe(2+)-trafficking protein from Laribacter hongkongensis (strain HLHK9).